The primary structure comprises 336 residues: D-altritol 5-dehydrogenase (336 aa).

Positions 37, 59, 60, 89, 92, 95, and 103 each coordinate Zn(2+).

Belongs to the zinc-containing alcohol dehydrogenase family. Zn(2+) serves as cofactor.

It carries out the reaction D-altritol + NAD(+) = keto-D-tagatose + NADH + H(+). Its pathway is carbohydrate metabolism. Functionally, involved in D-altritol catabolism. Catalyzes the oxidation of D-altritol to D-tagatose. The polypeptide is D-altritol 5-dehydrogenase (Agrobacterium fabrum (strain C58 / ATCC 33970) (Agrobacterium tumefaciens (strain C58))).